The primary structure comprises 400 residues: Subtilisin-like protease 2 (400 aa).

Residues 1-20 (MKFSQSLIALAACFLPLIAA) form the signal peptide. A propeptide spanning residues 21-119 (APEEAQHAKI…IERDGKVQAN (99 aa)) is cleaved from the precursor. In terms of domain architecture, Inhibitor I9 spans 42–117 (SYIVVFNKGV…AWIERDGKVQ (76 aa)). Asparagine 82 carries N-linked (GlcNAc...) asparagine glycosylation. A Peptidase S8 domain is found at 128–400 (TWGLGRISHK…NLIAYNGNGA (273 aa)). Residues aspartate 160, histidine 192, and serine 345 each act as charge relay system in the active site.

Belongs to the peptidase S8 family.

Its subcellular location is the secreted. With respect to regulation, potently inhibited by the serine peptidase inhibitor chymostatin. Also inhibited by antpain and PMSF. In terms of biological role, major secreted subtilisin-like serine endopeptidase. Preferentially cleaves substrates containing hydrophobic residues at P4, positively charged residues at P3, small or flexible residues at P2, and large, bulky residues at P1. Mediates the degradation of collagen, the major structural protein in the mammalian host. Degrades the nonhelical regions of collagen that function in the cross-linking of the helical components. May function as virulence factor involved in epidermal wing necrosis observed in white nose syndrome (WNS) in bats. The protein is Subtilisin-like protease 2 of Pseudogymnoascus destructans (strain ATCC MYA-4855 / 20631-21) (Bat white-nose syndrome fungus).